A 238-amino-acid polypeptide reads, in one-letter code: DNA repair protein RecO (238 aa).

It belongs to the RecO family.

Functionally, involved in DNA repair and RecF pathway recombination. This Anaplasma marginale (strain St. Maries) protein is DNA repair protein RecO.